A 113-amino-acid chain; its full sequence is Large ribosomal subunit protein uL22 (113 aa).

The protein belongs to the universal ribosomal protein uL22 family. As to quaternary structure, part of the 50S ribosomal subunit.

Functionally, this protein binds specifically to 23S rRNA; its binding is stimulated by other ribosomal proteins, e.g. L4, L17, and L20. It is important during the early stages of 50S assembly. It makes multiple contacts with different domains of the 23S rRNA in the assembled 50S subunit and ribosome. Its function is as follows. The globular domain of the protein is located near the polypeptide exit tunnel on the outside of the subunit, while an extended beta-hairpin is found that lines the wall of the exit tunnel in the center of the 70S ribosome. This chain is Large ribosomal subunit protein uL22, found in Oceanobacillus iheyensis (strain DSM 14371 / CIP 107618 / JCM 11309 / KCTC 3954 / HTE831).